The sequence spans 180 residues: Acireductone dioxygenase (180 aa).

4 residues coordinate Fe(2+): His-88, His-90, Glu-94, and His-133. 4 residues coordinate Ni(2+): His-88, His-90, Glu-94, and His-133.

The protein belongs to the acireductone dioxygenase (ARD) family. Monomer. Interacts with MMP14. Requires Fe(2+) as cofactor. It depends on Ni(2+) as a cofactor.

It is found in the cytoplasm. Its subcellular location is the nucleus. It localises to the cell membrane. The catalysed reaction is 1,2-dihydroxy-5-(methylsulfanyl)pent-1-en-3-one + O2 = 4-methylsulfanyl-2-oxobutanoate + formate + 2 H(+). The enzyme catalyses 1,2-dihydroxy-5-(methylsulfanyl)pent-1-en-3-one + O2 = 3-(methylsulfanyl)propanoate + CO + formate + 2 H(+). Its pathway is amino-acid biosynthesis; L-methionine biosynthesis via salvage pathway; L-methionine from S-methyl-5-thio-alpha-D-ribose 1-phosphate: step 5/6. Functionally, catalyzes 2 different reactions between oxygen and the acireductone 1,2-dihydroxy-3-keto-5-methylthiopentene (DHK-MTPene) depending upon the metal bound in the active site. Fe-containing acireductone dioxygenase (Fe-ARD) produces formate and 2-keto-4-methylthiobutyrate (KMTB), the alpha-ketoacid precursor of methionine in the methionine recycle pathway. Ni-containing acireductone dioxygenase (Ni-ARD) produces methylthiopropionate, carbon monoxide and formate, and does not lie on the methionine recycle pathway. The sequence is that of Acireductone dioxygenase from Gallus gallus (Chicken).